Here is a 58-residue protein sequence, read N- to C-terminus: Large ribosomal subunit protein bL32 (58 aa).

This sequence belongs to the bacterial ribosomal protein bL32 family.

This Limosilactobacillus fermentum (strain NBRC 3956 / LMG 18251) (Lactobacillus fermentum) protein is Large ribosomal subunit protein bL32.